An 854-amino-acid chain; its full sequence is Putative COX1/OXI3 intron 2 protein (854 aa).

Residues 329-613 (LSKDINTNMF…EGVSFLGYDV (285 aa)) enclose the Reverse transcriptase domain.

Its subcellular location is the mitochondrion. This is Putative COX1/OXI3 intron 2 protein (AI2) from Saccharomyces cerevisiae (strain ATCC 204508 / S288c) (Baker's yeast).